A 481-amino-acid polypeptide reads, in one-letter code: Surface lipoprotein assembly modifier 2 (481 aa).

The N-terminal stretch at 1 to 24 is a signal peptide; it reads MKNGVKQLFLLSLIGLSLTNVAWA. The interval 24–192 is N-terminal domain; the sequence is AEVARPKNDT…QYLLTLNQRN (169 aa). Residues 193 to 481 form a C-terminal probable beta barrel region; it reads QWIWQVGLNF…RIYLEIGKIF (289 aa). 14 beta stranded membrane passes run 194–204, 223–243, 248–257, 271–281, 285–295, 315–325, 329–339, 353–363, 368–377, 390–399, 404–414, 432–441, 448–458, and 471–481; these read WIWQVGLNFLN, AWEKESGQGVGYSLSVEKKWP, FFSKTMFNGN, TVRIGGGLGYQ, VEVSLFPFQEK, LGIRLENVDWL, WQISTALEYGE, YFVSSTLFYLP, FWFVGMDFHR, KTLRLGWGQD, ISSRLTFSYAN, YTTTITLWHR, LTPKLSWDYQK, and NRIYLEIGKIF.

This sequence belongs to the Slam family.

It is found in the cell outer membrane. Its function is as follows. Required for correct export to the cell surface of some cell outer membrane lipoproteins. The protein is Surface lipoprotein assembly modifier 2 of Haemophilus influenzae (strain ATCC 51907 / DSM 11121 / KW20 / Rd).